We begin with the raw amino-acid sequence, 156 residues long: MKIALSFLFLTSTFSNAGKIGRLQSVAVSGQLNCLGKPAVGVRIDLMESDNNGEETGIIDDNDFMGYTYTDSAGFFNMSGSEVEISGIEPYVNIFHKCNDGLSPCQRQLRVDIPKSATASGPAPNETFSIGTLELSSRKVIGERRSCAYRNLTQTS.

Residues methionine 1 to alanine 17 form the signal peptide. Asparagine 151 carries N-linked (GlcNAc...) asparagine glycosylation.

Belongs to the nematode transthyretin-like family.

Its subcellular location is the secreted. The polypeptide is Transthyretin-like protein 1 (ttr-1) (Caenorhabditis elegans).